The following is a 753-amino-acid chain: Nibrin (753 aa).

The FHA domain occupies 22–81 (YVVGRKNCAFLIQDDQSISRSHAVLTVSRPETTHSQSVSVPVLTIKDTSKYGTFVNGSKL). BRCT domains follow at residues 101 to 191 (SKFR…PTPE) and 221 to 311 (GKTF…LAVI). Position 274 is a phosphoserine (S274). Phosphoserine; by ATM is present on S343. The segment at 442–606 (RECTPRQQSN…NTKQREENEM (165 aa)) is disordered. Residues 446-455 (PRQQSNSITN) show a composition bias toward polar residues. The short motif at 461-467 (RKRERAE) is the Nuclear localization signal element. The span at 490–500 (CTESSASSAWN) shows a compositional bias: polar residues. Residues 517–528 (ESGELASDKTDI) show a composition bias toward basic and acidic residues. The span at 568-577 (QTANGDQEAQ) shows a compositional bias: polar residues. The segment covering 585–606 (CLETKGSRTEEGNTKQREENEM) has biased composition (basic and acidic residues). The short motif at 739–748 (ADDLFRYDPN) is the FxF/Y motif element.

Belongs to the Nibrin family. In terms of assembly, component of the MRN complex composed of two heterodimers RAD50 and mre11 associated with a single NBN.

Its subcellular location is the nucleus. It is found in the chromosome. The protein localises to the PML body. It localises to the telomere. Component of the MRN complex, which plays a central role in double-strand break (DSB) repair, DNA recombination, maintenance of telomere integrity and meiosis. The MRN complex is involved in the repair of DNA double-strand breaks (DSBs) via homologous recombination (HR), an error-free mechanism which primarily occurs during S and G2 phases. The complex (1) mediates the end resection of damaged DNA, which generates proper single-stranded DNA, a key initial steps in HR, and is (2) required for the recruitment of other repair factors and efficient activation of ATM and ATR upon DNA damage. The MRN complex possesses single-strand endonuclease activity and double-strand-specific 3'-5' exonuclease activity, which are provided by MRE11, to initiate end resection, which is required for single-strand invasion and recombination. Within the MRN complex, NBN acts as a protein-protein adapter, which specifically recognizes and binds phosphorylated proteins, promoting their recruitment to DNA damage sites. Recruits MRE11 and RAD50 components of the MRN complex to DSBs in response to DNA damage. Promotes the recruitment of PI3/PI4-kinase family members ATM, ATR, and probably DNA-PKcs to the DNA damage sites, activating their functions. Mediates the recruitment of phosphorylated RBBP8/CtIP to DSBs, leading to cooperation between the MRN complex and RBBP8/CtIP to initiate end resection. The MRN complex and rbbp8/CtIP are also required for chromosome alignment during metaphase. The polypeptide is Nibrin (NBN) (Gallus gallus (Chicken)).